A 388-amino-acid chain; its full sequence is Succinate--CoA ligase [ADP-forming] subunit beta (388 aa).

An ATP-grasp domain is found at 9-245 (KELLASYGLP…KSQENERELK (237 aa)). Residues lysine 46, 53-55 (GRG), glutamate 100, tyrosine 103, and glutamate 108 each bind ATP. The Mg(2+) site is built by asparagine 200 and aspartate 214. Substrate contacts are provided by residues asparagine 265 and 322 to 324 (GIV).

It belongs to the succinate/malate CoA ligase beta subunit family. Heterotetramer of two alpha and two beta subunits. Requires Mg(2+) as cofactor.

The enzyme catalyses succinate + ATP + CoA = succinyl-CoA + ADP + phosphate. The catalysed reaction is GTP + succinate + CoA = succinyl-CoA + GDP + phosphate. Its pathway is carbohydrate metabolism; tricarboxylic acid cycle; succinate from succinyl-CoA (ligase route): step 1/1. Functionally, succinyl-CoA synthetase functions in the citric acid cycle (TCA), coupling the hydrolysis of succinyl-CoA to the synthesis of either ATP or GTP and thus represents the only step of substrate-level phosphorylation in the TCA. The beta subunit provides nucleotide specificity of the enzyme and binds the substrate succinate, while the binding sites for coenzyme A and phosphate are found in the alpha subunit. The polypeptide is Succinate--CoA ligase [ADP-forming] subunit beta (Neisseria gonorrhoeae (strain NCCP11945)).